The primary structure comprises 62 residues: Large ribosomal subunit protein bL28 (62 aa).

It belongs to the bacterial ribosomal protein bL28 family.

The chain is Large ribosomal subunit protein bL28 from Parafrankia sp. (strain EAN1pec).